The chain runs to 308 residues: Elongation factor Ts (308 aa).

The segment at 80–83 is involved in Mg(2+) ion dislocation from EF-Tu; it reads TDFV.

This sequence belongs to the EF-Ts family.

It is found in the cytoplasm. Its function is as follows. Associates with the EF-Tu.GDP complex and induces the exchange of GDP to GTP. It remains bound to the aminoacyl-tRNA.EF-Tu.GTP complex up to the GTP hydrolysis stage on the ribosome. This is Elongation factor Ts from Rhizobium rhizogenes (strain K84 / ATCC BAA-868) (Agrobacterium radiobacter).